Here is a 285-residue protein sequence, read N- to C-terminus: Gas vesicle protein C2 (285 aa).

Tandem repeats lie at residues 22–52, 53–84, 85–122, 123–155, 156–188, and 189–220. Residues 22–220 form a 6 X approximate tandem repeats region; sequence EAMDAYAEEF…ADDTTAQTDV (199 aa).

Belongs to the halobacterial gas vesicle GvpC family.

Its subcellular location is the gas vesicle. Its function is as follows. Confers stability, involved in shaping gas vesicles (GV), hollow, gas filled proteinaceous nanostructures. GVs allow positioning of halobacteria at an optimal depth for growth in the poorly aerated, shallow brine pools of their habitat. Functionally, expression of 2 c-vac DNA fragments containing 2 divergently transcribed regions (gvpE-gvpF-gvpG-gvpH-gvpI-gvpJ-gvpK-gvpL-gvpM and gvpA-gvpC-gvpN-gvpO) allows H.volcanii to produce gas vesicles. In Halobacterium salinarum (strain ATCC 700922 / JCM 11081 / NRC-1) (Halobacterium halobium), this protein is Gas vesicle protein C2.